The primary structure comprises 750 residues: Methylmalonyl-CoA mutase, mitochondrial (750 aa).

Residues 1–32 (MLRAKNQLFLLSPHYLRQVKESSGSRLIQQRL) constitute a mitochondrion transit peptide. Residue Q50 coordinates malonyl-CoA. The residue at position 89 (K89) is an N6-acetyllysine. Malonyl-CoA contacts are provided by residues 96–99 (YPTM) and 106–110 (TIRQY). At K212 the chain carries N6-acetyllysine. Malonyl-CoA contacts are provided by residues 216–218 (TIQ), R228, K255, H265, and 304–306 (RLS). K335 is modified (N6-acetyllysine). K343 bears the N6-succinyllysine mark. S481 is subject to Phosphoserine. Position 595 is an N6-succinyllysine (K595). Residue K602 is modified to N6-acetyllysine. In terms of domain architecture, B12-binding spans 614-746 (RPRLLVAKMG…DDIEKCLEKK (133 aa)). An adenosylcob(III)alamin-binding site is contributed by H627.

The protein belongs to the methylmalonyl-CoA mutase family. In terms of assembly, homodimer. Interacts (the apoenzyme form) with MMAA; the interaction is GTP dependent. Requires adenosylcob(III)alamin as cofactor.

It localises to the mitochondrion matrix. It is found in the mitochondrion. The protein localises to the cytoplasm. It carries out the reaction (R)-methylmalonyl-CoA = succinyl-CoA. With respect to regulation, inhibited by itaconyl-CoA, a metabolite that inactivates the coenzyme B12 cofactor. In terms of biological role, catalyzes the reversible isomerization of methylmalonyl-CoA (MMCoA) (generated from branched-chain amino acid metabolism and degradation of dietary odd chain fatty acids and cholesterol) to succinyl-CoA (3-carboxypropionyl-CoA), a key intermediate of the tricarboxylic acid cycle. This Bos taurus (Bovine) protein is Methylmalonyl-CoA mutase, mitochondrial (MMUT).